Here is a 200-residue protein sequence, read N- to C-terminus: Ras-related protein RHN1 (200 aa).

GTP is bound by residues 17–25, 36–42, 65–69, 123–126, and 153–155; these read GDMGAGKSS, LEFQEST, DTAGQ, NKAD, and SAK. The short motif at 39 to 47 is the Effector region element; sequence QESTIGAAF. 2 S-geranylgeranyl cysteine lipidation sites follow: cysteine 198 and cysteine 199.

It belongs to the small GTPase superfamily. Rab family. High in stem, root, and inflorescence.

The protein localises to the cell membrane. Its function is as follows. Protein transport. Probably involved in vesicular traffic. This chain is Ras-related protein RHN1 (RHN1), found in Nicotiana plumbaginifolia (Leadwort-leaved tobacco).